The chain runs to 445 residues: Argininosuccinate synthase (445 aa).

ATP-binding positions include 17–25 and Ala43; that span reads AFSGGLDTS. Residue Tyr99 coordinates L-citrulline. Gly129 and Thr131 together coordinate ATP. Residues Thr131, Asn135, and Asp136 each contribute to the L-aspartate site. Residue Asn135 participates in L-citrulline binding. Asp136 is a binding site for ATP. Residues Arg139 and Ser192 each coordinate L-citrulline. ATP is bound at residue Asp194. The L-citrulline site is built by Thr201, Glu203, and Glu280.

This sequence belongs to the argininosuccinate synthase family. Type 2 subfamily. As to quaternary structure, homotetramer.

It localises to the cytoplasm. The enzyme catalyses L-citrulline + L-aspartate + ATP = 2-(N(omega)-L-arginino)succinate + AMP + diphosphate + H(+). The protein operates within amino-acid biosynthesis; L-arginine biosynthesis; L-arginine from L-ornithine and carbamoyl phosphate: step 2/3. This Polaromonas naphthalenivorans (strain CJ2) protein is Argininosuccinate synthase.